The sequence spans 194 residues: Fibroblast growth factor 7 (194 aa).

A signal peptide spans 1–31 (MRKWILTWILPSLLYRSCFHIICLVGTISLA). The N-linked (GlcNAc...) asparagine glycan is linked to asparagine 45.

Belongs to the heparin-binding growth factors family. In terms of assembly, interacts with FGFBP1. Interacts with FGFR2. Affinity between fibroblast growth factors (FGFs) and their receptors is increased by heparan sulfate glycosaminoglycans that function as coreceptors.

In terms of biological role, plays an important role in the regulation of embryonic development, cell proliferation and cell differentiation. Required for normal branching morphogenesis. Growth factor active on keratinocytes. Possible major paracrine effector of normal epithelial cell proliferation. The polypeptide is Fibroblast growth factor 7 (FGF7) (Ovis aries (Sheep)).